The sequence spans 146 residues: Protein archease (146 aa).

Residues aspartate 16, aspartate 145, and isoleucine 146 each contribute to the Ca(2+) site.

This sequence belongs to the archease family.

Activates the tRNA-splicing ligase complex by facilitating the enzymatic turnover of catalytic subunit RtcB. Acts by promoting the guanylylation of RtcB, a key intermediate step in tRNA ligation. Can also alter the NTP specificity of RtcB such that ATP, dGTP or ITP is used efficiently. The sequence is that of Protein archease from Methanosarcina acetivorans (strain ATCC 35395 / DSM 2834 / JCM 12185 / C2A).